Consider the following 288-residue polypeptide: Acetyl-coenzyme A carboxylase carboxyl transferase subunit beta (288 aa).

Residues 32 to 288 (LLLICPKCKK…ILMLHNVEAR (257 aa)) form the CoA carboxyltransferase N-terminal domain. Zn(2+) is bound by residues Cys-36, Cys-39, Cys-55, and Cys-58. A C4-type zinc finger spans residues 36–58 (CPKCKKTLLKSELADNLDVCREC).

It belongs to the AccD/PCCB family. As to quaternary structure, acetyl-CoA carboxylase is a heterohexamer composed of biotin carboxyl carrier protein (AccB), biotin carboxylase (AccC) and two subunits each of ACCase subunit alpha (AccA) and ACCase subunit beta (AccD). Requires Zn(2+) as cofactor.

It localises to the cytoplasm. The catalysed reaction is N(6)-carboxybiotinyl-L-lysyl-[protein] + acetyl-CoA = N(6)-biotinyl-L-lysyl-[protein] + malonyl-CoA. Its pathway is lipid metabolism; malonyl-CoA biosynthesis; malonyl-CoA from acetyl-CoA: step 1/1. Functionally, component of the acetyl coenzyme A carboxylase (ACC) complex. Biotin carboxylase (BC) catalyzes the carboxylation of biotin on its carrier protein (BCCP) and then the CO(2) group is transferred by the transcarboxylase to acetyl-CoA to form malonyl-CoA. This Ruminiclostridium cellulolyticum (strain ATCC 35319 / DSM 5812 / JCM 6584 / H10) (Clostridium cellulolyticum) protein is Acetyl-coenzyme A carboxylase carboxyl transferase subunit beta.